The primary structure comprises 221 residues: UPF0502 protein PSPTO_2686 (221 aa).

The protein belongs to the UPF0502 family.

The polypeptide is UPF0502 protein PSPTO_2686 (Pseudomonas syringae pv. tomato (strain ATCC BAA-871 / DC3000)).